Reading from the N-terminus, the 635-residue chain is Frizzled and smoothened-like protein C (635 aa).

Residues 1–20 (MKFKLIIFIIIIYIIKILKS) form the signal peptide. The Extracellular segment spans residues 21–244 (EILNEFGYGL…NKWVQMYKMS (224 aa)). One can recognise an FZ domain in the interval 32-166 (DENLKCLSFI…LTKYGYTENN (135 aa)). 2 disulfide bridges follow: cysteine 37–cysteine 108 and cysteine 50–cysteine 101. 5 N-linked (GlcNAc...) asparagine glycosylation sites follow: asparagine 65, asparagine 141, asparagine 156, asparagine 185, and asparagine 203. Residues 245–265 (IVLSTLSFICSIYNIITFGLL) traverse the membrane as a helical segment. Residues 266-275 (SKLKSKYNLC) are Cytoplasmic-facing. A helical transmembrane segment spans residues 276 to 296 (ITFFSVSTVLMSLMDIVTYGI). The Extracellular portion of the chain corresponds to 297–314 (GYEELLCPESGRYAIQSD). The chain crosses the membrane as a helical span at residues 315-335 (VACGVTGAFFHIGITTGVLWW). Residues 336–356 (TTMSICLYSEVKRFKMISFRY) are Cytoplasmic-facing. A helical membrane pass occupies residues 357–377 (IIIFNSVISLILLIIPLSGQA). The Extracellular portion of the chain corresponds to 378 to 398 (FMSGNGSLGCWIRKTWYANGT). Residues asparagine 382 and asparagine 396 are each glycosylated (N-linked (GlcNAc...) asparagine). The helical transmembrane segment at 399 to 419 (FWIPCGISLFIGAICIVLVIY) threads the bilayer. The Cytoplasmic portion of the chain corresponds to 420–440 (EIFKISRNLSKDNKPLMFQIR). The helical transmembrane segment at 441–461 (PFLCVLLVGGSFLYLFIFYFN) threads the bilayer. The Extracellular segment spans residues 462–496 (NERNLDKYKAAIPSYVQCLLSSDENGEDCLTDGPG). The helical transmembrane segment at 497 to 517 (FGAYFTFYFFTRLFGITSFSI) threads the bilayer. Topologically, residues 518–635 (YGTSKIARDI…SSKDSNTNSF (118 aa)) are cytoplasmic. The segment covering 559 to 594 (SISGSNQKRFNRNGSNFNMKQNKSNPNDSISLSVVE) has biased composition (polar residues). The interval 559–635 (SISGSNQKRF…SSKDSNTNSF (77 aa)) is disordered. A coiled-coil region spans residues 594-623 (ESTKKQDTENELESNIETKENRSTDISIEN). Over residues 623–635 (NTTSSKDSNTNSF) the composition is skewed to low complexity.

It belongs to the G-protein coupled receptor Fz/Smo family.

The protein resides in the membrane. In Dictyostelium discoideum (Social amoeba), this protein is Frizzled and smoothened-like protein C (fslC).